Consider the following 325-residue polypeptide: Helicase VP6-A (325 aa).

Disordered stretches follow at residues 1–127 (MLLA…NGRR) and 174–230 (EGVA…EPAR). Basic and acidic residues-rich tracts occupy residues 8 to 18 (VIKRSSEELKQ), 32 to 54 (EGGKENKTEPKEESKAEGSKDGE), 61 to 79 (GQKEEGGKETKDADVDRRI), and 92 to 105 (PGERANENADRGDG). Lys-106 serves as a coordination point for ATP. Residues 106–122 (KVGGGGGDADAGVGATG) show a composition bias toward gly residues. A compositionally biased stretch (basic and acidic residues) spans 175-229 (GVAEQTERSRDLRRKEKNGTHAKAVERGGRKQRKESHGDAQREGVEEEKTSEEPA).

It belongs to the orbivirus VP6 family. In terms of assembly, homohexamer.

The protein resides in the virion. The enzyme catalyses ATP + H2O = ADP + phosphate + H(+). ATP dependent RNA helicase essential for RNA packaging and viral transcription. Possesses ss- and dsRNA-binding capacity. The sequence is that of Helicase VP6-A (Segment-9) from Bluetongue virus 13 (isolate USA) (BTV 13).